We begin with the raw amino-acid sequence, 427 residues long: Chaperone SurA (427 aa).

The first 19 residues, 1-19 (MKIWKSILFTTLLSCGAVA), serve as a signal peptide directing secretion. 2 consecutive PpiC domains span residues 170-268 (TVQY…KIED) and 277-377 (VTEV…EVLD).

The protein localises to the periplasm. It catalyses the reaction [protein]-peptidylproline (omega=180) = [protein]-peptidylproline (omega=0). Its function is as follows. Chaperone involved in the correct folding and assembly of outer membrane proteins. Recognizes specific patterns of aromatic residues and the orientation of their side chains, which are found more frequently in integral outer membrane proteins. May act in both early periplasmic and late outer membrane-associated steps of protein maturation. This chain is Chaperone SurA, found in Vibrio parahaemolyticus serotype O3:K6 (strain RIMD 2210633).